The primary structure comprises 573 residues: Probable zinc metallopeptidase EGY3, chloroplastic (573 aa).

A chloroplast-targeting transit peptide spans 1 to 50; the sequence is MASLFVSTPSSSLTLKSCHSLHLRRFDRAEFSNFGKASVNQTTRSRHSLR. Positions 38–105 are disordered; sequence SVNQTTRSRH…EKKSKQQEMD (68 aa). 2 stretches are compositionally biased toward basic and acidic residues: residues 52–62 and 96–105; these read SAEDDRVREPV and EKKSKQQEMD. A coiled-coil region spans residues 122–185; the sequence is EAAIKLEKTR…KALDLNKLKS (64 aa). The next 7 membrane-spanning stretches (helical) occupy residues 274–294, 305–325, 376–396, 414–434, 441–461, 493–513, and 536–556; these read VSAIALCVTTFGTIALMSGFF, IANVVPLFGGFLSILGVSEIA, ASAYLTSLLLAAAAFISDGSF, PLLSFVQFVVGPYADDLGNVL, VGVPVDPLAFAGLLGMVVTSL, LLLGIGGLSGSVLCLAWGLFA, and FAWGIVLGLICFLTLFPNSGG.

The protein belongs to the peptidase M50B family.

It is found in the plastid. The protein localises to the chloroplast membrane. Probable membrane-associated metalloprotease that may be involved in chloroplast development. The chain is Probable zinc metallopeptidase EGY3, chloroplastic (EGY3) from Arabidopsis thaliana (Mouse-ear cress).